We begin with the raw amino-acid sequence, 328 residues long: uncharacterized protein (328 aa).

The segment at residues 72–91 (ALQIRDKFNLQRVIIVPDGE) is a DNA-binding region (H-T-H motif).

This sequence belongs to the SorC transcriptional regulatory family.

This is an uncharacterized protein from Escherichia coli (strain K12).